We begin with the raw amino-acid sequence, 427 residues long: Gamma-glutamyl phosphate reductase (427 aa).

It belongs to the gamma-glutamyl phosphate reductase family.

It is found in the cytoplasm. It carries out the reaction L-glutamate 5-semialdehyde + phosphate + NADP(+) = L-glutamyl 5-phosphate + NADPH + H(+). It functions in the pathway amino-acid biosynthesis; L-proline biosynthesis; L-glutamate 5-semialdehyde from L-glutamate: step 2/2. Functionally, catalyzes the NADPH-dependent reduction of L-glutamate 5-phosphate into L-glutamate 5-semialdehyde and phosphate. The product spontaneously undergoes cyclization to form 1-pyrroline-5-carboxylate. In Rhizobium rhizogenes (strain K84 / ATCC BAA-868) (Agrobacterium radiobacter), this protein is Gamma-glutamyl phosphate reductase.